We begin with the raw amino-acid sequence, 64 residues long: Large ribosomal subunit protein bL35 (64 aa).

Belongs to the bacterial ribosomal protein bL35 family.

This Carboxydothermus hydrogenoformans (strain ATCC BAA-161 / DSM 6008 / Z-2901) protein is Large ribosomal subunit protein bL35.